The sequence spans 484 residues: Rho guanine nucleotide exchange factor 35 (484 aa).

The disordered stretch occupies residues 139 to 418 (FSSDLGSEEE…ALIAPEDSPH (280 aa)). Ser184 carries the post-translational modification Phosphoserine. Residues 217–237 (ESQGLLHPQEVQVLEEQGQQE) show a composition bias toward low complexity. Residues 266–278 (NDEKGEQKQKQEQ) show a composition bias toward basic and acidic residues. The segment covering 299–309 (GLNDGEWEQED) has biased composition (acidic residues). 2 stretches are compositionally biased toward basic and acidic residues: residues 323 to 368 (GEER…KEKG) and 394 to 404 (RSREEENEHHG).

This chain is Rho guanine nucleotide exchange factor 35 (ARHGEF35), found in Homo sapiens (Human).